Reading from the N-terminus, the 275-residue chain is Polyamine aminopropyltransferase (275 aa).

One can recognise a PABS domain in the interval 2 to 235 (HLWFTEKQND…AMWSFTIGSK (234 aa)). Q31 contributes to the S-methyl-5'-thioadenosine binding site. Positions 62 and 86 each coordinate spermidine. Residues E106 and 137 to 138 (DG) contribute to the S-methyl-5'-thioadenosine site. Catalysis depends on D155, which acts as the Proton acceptor. 155–158 (DSTD) is a binding site for spermidine. P162 is an S-methyl-5'-thioadenosine binding site.

This sequence belongs to the spermidine/spermine synthase family. As to quaternary structure, homodimer or homotetramer.

Its subcellular location is the cytoplasm. It catalyses the reaction S-adenosyl 3-(methylsulfanyl)propylamine + putrescine = S-methyl-5'-thioadenosine + spermidine + H(+). The protein operates within amine and polyamine biosynthesis; spermidine biosynthesis; spermidine from putrescine: step 1/1. In terms of biological role, catalyzes the irreversible transfer of a propylamine group from the amino donor S-adenosylmethioninamine (decarboxy-AdoMet) to putrescine (1,4-diaminobutane) to yield spermidine. The polypeptide is Polyamine aminopropyltransferase (Desulforudis audaxviator (strain MP104C)).